The chain runs to 2036 residues: Transmembrane channel-like protein (2036 aa).

Disordered regions lie at residues 1–178 (MQND…IDDE) and 194–243 (SVRG…ESTQ). Topologically, residues 1 to 353 (MQNDEEPAAA…GVASYFTFLR (353 aa)) are cytoplasmic. Residues 58-73 (VGSSSSNGNTSNVATG) show a composition bias toward low complexity. Over residues 74–90 (ANSENNSGVTSPHQLSV) the composition is skewed to polar residues. Over residues 125 to 134 (ASQEDHRSYE) the composition is skewed to basic and acidic residues. Over residues 166–178 (FDEDGGGGDIDDE) the composition is skewed to acidic residues. Residues 198–208 (YRGKRGSRSSR) show a composition bias toward basic residues. The span at 216–225 (HVLDSVERRR) shows a compositional bias: basic and acidic residues. Residues 227 to 243 (SVYTTSSEEGTNQESTQ) are compositionally biased toward polar residues. A helical transmembrane segment spans residues 354–374 (WLMWVNIMIAIPLVAFVIGPE). Residues 375–395 (YFATKHGETDPRKRMSDPEAR) are Extracellular-facing. A helical membrane pass occupies residues 396-418 (VAGNLFTFWEFEGYLKYSPMFYG). The Cytoplasmic segment spans residues 419–432 (YYSSTSGISTSGYK). The chain crosses the membrane as a helical span at residues 433–453 (LPLAYFLTAVLVYIYSFVATL). The Extracellular portion of the chain corresponds to 454-526 (RKMAENSRNS…NRNWRVILQR (73 aa)). A helical transmembrane segment spans residues 527-547 (ILVNILVMGLLGLSGATVVLL). The Cytoplasmic portion of the chain corresponds to 548–567 (VNHSEDLAKHDNWLSRNAVN). The chain crosses the membrane as a helical span at residues 568-588 (VTMTLLSFFLPMIFEALGLFE). At 589-599 (NWHPRQQLRLQ) the chain is on the extracellular side. The chain crosses the membrane as a helical span at residues 600-620 (LARIMILNMLNLYSLMFSFIY). Over 621–1308 (KINSKEKPLQ…ILTLINNQGQ (688 aa)) the chain is Cytoplasmic. Disordered stretches follow at residues 789–839 (TTAT…TEAT), 860–967 (KPLG…TDQA), 996–1027 (FFTS…NATP), 1066–1143 (LRGR…EGSE), and 1186–1205 (GSTT…KQLT). Positions 870-885 (IPNSTTNSATLSTIPA) are enriched in polar residues. Low complexity predominate over residues 886 to 906 (TLNTTNLPLNSTTKLTTTTST). Residues 933–952 (TSDAPDNNSYSDITDYSSEP) are compositionally biased toward polar residues. Positions 953–967 (SEIEDFDEQESTDQA) are enriched in acidic residues. Low complexity-rich tracts occupy residues 1069–1083 (RITT…STTT), 1091–1100 (RTTTTELTST), and 1107–1130 (TTES…SSST). Residues 1309–1329 (VWMGIFFSPGLVLINLVKLMI) traverse the membrane as a helical segment. Residues 1330–1358 (MMYFRSWIVLTCNVPHEVVFKASKSNNFY) lie on the Extracellular side of the membrane. Residues 1359-1379 (LSLLLTMLFLCVLPVGYAIVW) traverse the membrane as a helical segment. The Cytoplasmic segment spans residues 1380–1423 (LRPSWHCGPFSEYNRIAEFITNTTRNALPKQLHEPLDYLTSSST). A helical membrane pass occupies residues 1424–1444 (VIPLLLLLILIIYYLVSLTGA). Over 1445 to 2036 (LREANQDLRT…RIDIENEHEK (592 aa)) the chain is Extracellular. 3 disordered regions span residues 1527-1572 (LRKG…SRLQ), 1592-1841 (ERAR…SRQG), and 1859-1990 (KKDD…IPTI). Composition is skewed to basic and acidic residues over residues 1538–1566 (SFVR…DKRF), 1614–1640 (KETH…DKKD), 1658–1668 (SPKDNEHDPDT), 1727–1743 (HIVD…EDKP), and 1777–1793 (PEPE…ERSS). The segment covering 1806 to 1838 (NEPSGTEEQDRSLPSPTPSQGQGHHQRQLSVLS) has biased composition (polar residues). A compositionally biased stretch (low complexity) spans 1890–1899 (VLSSVSSSTA). The segment covering 1903-1914 (PPTPEPESPTPS) has biased composition (pro residues). Residues 1976 to 1990 (QDSQSSIWSDNIPTI) show a composition bias toward polar residues.

The protein belongs to the TMC family. In terms of tissue distribution, expressed in multi-dendritic neurons of the labellum (md-L), which extend elaborate dendritic arbors innervating the bases of taste hairs (at protein level). In larvae, expressed in class I and class II dendritic arborization (da) neurons and bipolar dendrite (bd) neurons (at protein level). In adults, expressed in various sensory neurons including those in the mouth parts, olfactory neurons in the antenna, wing bristle neurons, haltere neurons, arista neurons, and many other sensory neurons, including a subset of chordotonal (Cho) neurons. Expressed in md-L axon terminals, including those that project into the subesophageal zone (SEZ). Also expressed in a small number of local neurons in the adult ventral nerve cord (VNC), and projections extending from a few neurons in the legs or wing hinges. In the adult mouth, expressed in a few multi-dendritic neurons of the ventral cibarial sensory organ (VCSO); the multiple elaborate dendritic branches form a brush-like structure that faces the luminal side of the food-passing tunnel. Also expressed in the oviduct and uterus of adult females.

It is found in the cell membrane. It localises to the cell projection. The protein resides in the dendrite. Functionally, probable ion channel. Component of mechanosensitive neurons that participates in proprioception, sensing food texture, and directing egg-laying site selection (oviposition). Component of multi-dendritic neurons of the labellum (md-L) where it is required for sensing the hardness and viscosity of their food, enabling them to behaviorally discriminate their preferred softness and smoothness from harder and stickier food options. Required as part of oviposition site selection process to relay mechanosensory and chemosensory information on the hardness and sweetness of potential egg-laying substrates, thus ensuring females select the most optimal site for their eggs survival. Females determine the softest substrate for their eggs first by making a coarse evaluation of substrate hardness using mechanosensitive channels nan and Piezo in the leg tarsal bristles, followed by a much finer assessment using nan, iav and Tmc mechanosensitive channels on the labellum. This protein is required to sense subtle differences in substrate stiffness (between 0.25% and 0.3% agarose), likely acting in the md-L neurons. Also required in neurons on the labellum, including the md-Ls, and possibly in the brain, to inhibit discrimination of egg-laying substrates of different hardness if the substrate contains sucrose. During oviposition evaluation, activation of sweet neurons by sucrose enhances the activity of the Tmc neurons resulting in females losing their softness preference in favor of egg-laying sites that contain sucrose. Acts in the larvae peripheral sensory neurons, to contribute to proprioception and sensory feedback for normal forward crawling behavior. Required for the normal activity of the proprioceptive sensory dendrites, ddaE which show preferential responses to forward locomotion, and ddaD which show preferential responses to backward locomotion. This chain is Transmembrane channel-like protein, found in Drosophila melanogaster (Fruit fly).